Here is a 291-residue protein sequence, read N- to C-terminus: Proteasomal ubiquitin receptor ADRM1 homolog rpn1301 (291 aa).

The region spanning 1-114 (MSLITFKAGK…ERINSYIKDQ (114 aa)) is the Pru domain. The tract at residues 135–162 (TVEQSEPIAQPTESSKESSEIGAPNSDE) is disordered. Residues 178-290 (AQAGFGGSTV…ARFVSRNNGS (113 aa)) enclose the DEUBAD domain.

This sequence belongs to the ADRM1 family. As to quaternary structure, component of the 19S proteasome regulatory particle complex. The 2 S.pombe rpn13 homologs, rpn1301 and rpn1302 are present at a 0.2-1 ratio.

It localises to the cytoplasm. The protein resides in the nucleus. In terms of biological role, component of the 26S proteasome, a multiprotein complex involved in the ATP-dependent degradation of ubiquitinated proteins. This complex plays a key role in the maintenance of protein homeostasis by removing misfolded or damaged proteins, which could impair cellular functions, and by removing proteins whose functions are no longer required. Therefore, the proteasome participates in numerous cellular processes, including cell cycle progression, apoptosis, or DNA damage repair. Within the complex, functions as a proteasomal ubiquitin receptor. The polypeptide is Proteasomal ubiquitin receptor ADRM1 homolog rpn1301 (rpn1301) (Schizosaccharomyces pombe (strain 972 / ATCC 24843) (Fission yeast)).